A 321-amino-acid polypeptide reads, in one-letter code: Glucokinase (321 aa).

An ATP-binding site is contributed by 8-13 (GDVGGT).

The protein belongs to the bacterial glucokinase family.

It localises to the cytoplasm. It carries out the reaction D-glucose + ATP = D-glucose 6-phosphate + ADP + H(+). This chain is Glucokinase, found in Escherichia fergusonii (strain ATCC 35469 / DSM 13698 / CCUG 18766 / IAM 14443 / JCM 21226 / LMG 7866 / NBRC 102419 / NCTC 12128 / CDC 0568-73).